A 354-amino-acid chain; its full sequence is MPSKNLQQAVLTNEFTTNFITTCKDWLDVNGLAKGNLEKKRDDNEEEERLKTESKLPGHDIHGFDNEIKSLQHFLLDQKVRREFKSLVIVGEYGVGKTALCQKIFNDEAVKSVYAPRVWVSMENKESKEGLDGKICVLKKILKGLGVEELILETISTDAKQEFKDNEEVASNQEAGEIDRETEKEKELSALLYALHLNLRWKKYLIVFDDVRENDNWDEKLDAKLKEDEKWGKYLSDGFPKGSGGRVIYTTRDENLAKNLVAQKHEIHRLWPLSDHQSVWKIYDAVVKDKQKESPRNDKKCIDELMNKSRGLPLAARLLAERDPVFVDDEVGPVGSTHGQTDSSNRQPANQASS.

The stretch at 33-53 forms a coiled coil; that stretch reads AKGNLEKKRDDNEEEERLKTE. The region spanning 45 to 122 is the NB-ARC domain; sequence EEEERLKTES…VYAPRVWVSM (78 aa). 91–98 is an ATP binding site; that stretch reads GEYGVGKT. The tract at residues 328–354 is disordered; that stretch reads DDEVGPVGSTHGQTDSSNRQPANQASS. A compositionally biased stretch (polar residues) spans 337 to 354; it reads THGQTDSSNRQPANQASS.

In terms of biological role, possible disease resistance protein. The protein is Probable disease resistance protein At5g45490 of Arabidopsis thaliana (Mouse-ear cress).